Reading from the N-terminus, the 255-residue chain is Hydroxyacylglutathione hydrolase (255 aa).

H53, H55, D57, H58, H110, D127, and H165 together coordinate Zn(2+).

The protein belongs to the metallo-beta-lactamase superfamily. Glyoxalase II family. As to quaternary structure, monomer. It depends on Zn(2+) as a cofactor.

It carries out the reaction an S-(2-hydroxyacyl)glutathione + H2O = a 2-hydroxy carboxylate + glutathione + H(+). It functions in the pathway secondary metabolite metabolism; methylglyoxal degradation; (R)-lactate from methylglyoxal: step 2/2. Functionally, thiolesterase that catalyzes the hydrolysis of S-D-lactoyl-glutathione to form glutathione and D-lactic acid. In Xanthomonas oryzae pv. oryzae (strain MAFF 311018), this protein is Hydroxyacylglutathione hydrolase.